A 70-amino-acid polypeptide reads, in one-letter code: Small ribosomal subunit protein bS21 (70 aa).

The protein belongs to the bacterial ribosomal protein bS21 family.

The chain is Small ribosomal subunit protein bS21 from Neisseria gonorrhoeae (strain ATCC 700825 / FA 1090).